A 215-amino-acid chain; its full sequence is N-(5'-phosphoribosyl)anthranilate isomerase (215 aa).

It belongs to the TrpF family.

The enzyme catalyses N-(5-phospho-beta-D-ribosyl)anthranilate = 1-(2-carboxyphenylamino)-1-deoxy-D-ribulose 5-phosphate. The protein operates within amino-acid biosynthesis; L-tryptophan biosynthesis; L-tryptophan from chorismate: step 3/5. The polypeptide is N-(5'-phosphoribosyl)anthranilate isomerase (Paramagnetospirillum magneticum (strain ATCC 700264 / AMB-1) (Magnetospirillum magneticum)).